Here is a 281-residue protein sequence, read N- to C-terminus: DegV domain-containing protein SCO2569 (281 aa).

The 276-residue stretch at 5 to 280 (VAIVTDSTAY…PGLLGVVVSS (276 aa)) folds into the DegV domain. The hexadecanoate site is built by Thr-62 and Ser-95.

Its function is as follows. May bind long-chain fatty acids, such as palmitate, and may play a role in lipid transport or fatty acid metabolism. The protein is DegV domain-containing protein SCO2569 of Streptomyces coelicolor (strain ATCC BAA-471 / A3(2) / M145).